Reading from the N-terminus, the 690-residue chain is Methionine--tRNA ligase (690 aa).

Residues 12 to 22 carry the 'HIGH' region motif; that stretch reads PYANGSIHLGH. Cysteine 143, cysteine 146, cysteine 156, and cysteine 159 together coordinate Zn(2+). The 'KMSKS' region signature appears at 328-332; that stretch reads KMSKS. Lysine 331 is an ATP binding site. Residues 582–690 enclose the tRNA-binding domain; it reads DFAKVDLRIA…SGAEPGMKVK (109 aa).

Belongs to the class-I aminoacyl-tRNA synthetase family. MetG type 1 subfamily. As to quaternary structure, homodimer. Zn(2+) is required as a cofactor.

It localises to the cytoplasm. It carries out the reaction tRNA(Met) + L-methionine + ATP = L-methionyl-tRNA(Met) + AMP + diphosphate. Is required not only for elongation of protein synthesis but also for the initiation of all mRNA translation through initiator tRNA(fMet) aminoacylation. The polypeptide is Methionine--tRNA ligase (Thiobacillus denitrificans (strain ATCC 25259 / T1)).